Here is a 320-residue protein sequence, read N- to C-terminus: ATP-dependent 6-phosphofructokinase (320 aa).

Residue Gly12 participates in ATP binding. ADP contacts are provided by residues 22–26 and 55–60; these read RGVVR and RYSVSD. Residues 73-74 and 103-106 contribute to the ATP site; these read RF and GDGS. A Mg(2+)-binding site is contributed by Asp104. Residue 126–128 participates in substrate binding; the sequence is TID. Catalysis depends on Asp128, which acts as the Proton acceptor. Arg155 contributes to the ADP binding site. Residues Arg163 and 170–172 each bind substrate; that span reads MGR. ADP is bound by residues 186-188, Lys212, and 214-216; these read GCE and KKH. Residues Glu223, Arg244, and 250 to 253 contribute to the substrate site; that span reads HIQR.

Belongs to the phosphofructokinase type A (PFKA) family. ATP-dependent PFK group I subfamily. Prokaryotic clade 'B1' sub-subfamily. In terms of assembly, homotetramer. The cofactor is Mg(2+).

The protein localises to the cytoplasm. The catalysed reaction is beta-D-fructose 6-phosphate + ATP = beta-D-fructose 1,6-bisphosphate + ADP + H(+). The protein operates within carbohydrate degradation; glycolysis; D-glyceraldehyde 3-phosphate and glycerone phosphate from D-glucose: step 3/4. Its activity is regulated as follows. Allosterically activated by ADP and other diphosphonucleosides, and allosterically inhibited by phosphoenolpyruvate. Catalyzes the phosphorylation of D-fructose 6-phosphate to fructose 1,6-bisphosphate by ATP, the first committing step of glycolysis. The polypeptide is ATP-dependent 6-phosphofructokinase (Buchnera aphidicola subsp. Acyrthosiphon pisum (strain 5A)).